The following is a 182-amino-acid chain: Small ribosomal subunit protein uS4c (182 aa).

Residues 12-31 (PGFTSKRPRSGSDLKNPLRS) are disordered. The region spanning 82–143 (MRLDNILFRL…KQRSKALIQN (62 aa)) is the S4 RNA-binding domain.

Belongs to the universal ribosomal protein uS4 family. Part of the 30S ribosomal subunit. Contacts protein S5. The interaction surface between S4 and S5 is involved in control of translational fidelity.

It is found in the plastid. The protein resides in the chloroplast. In terms of biological role, one of the primary rRNA binding proteins, it binds directly to 16S rRNA where it nucleates assembly of the body of the 30S subunit. Its function is as follows. With S5 and S12 plays an important role in translational accuracy. The polypeptide is Small ribosomal subunit protein uS4c (rps4) (Hymenocallis littoralis (Beach spider-lily)).